Consider the following 62-residue polypeptide: Potassium channel toxin alpha-KTx 6.21 (62 aa).

The first 24 residues, 1–24, serve as a signal peptide directing secretion; the sequence is MNAKLIYLLLVVTTMMLTFDTTQA. Intrachain disulfides connect Cys29/Cys50, Cys35/Cys55, Cys39/Cys57, and Cys45/Cys60. Val61 carries the valine amide modification.

This sequence belongs to the short scorpion toxin superfamily. Potassium channel inhibitor family. Alpha-KTx 06 subfamily. C-terminal amidation is important for activity. There is a 50-70-fold decrease in ability to inhibit Kv1.2/KCNA2 when the toxin is not amidated. This decrease may be explained by a 23-fold slower association rate (k(on)) together with a 2-fold faster dissociation rate (k(off)). Expressed by the venom gland.

Its subcellular location is the secreted. Reversible blocker of voltage-gated potassium channels with fast binding and unbinding kinetics. Has highest activity on human voltage-gated potassium channel Kv1.2/KCNA2 channels (IC(50)=0.11-0.16 nM), whereas its affinity for other channels tested was in the nanomolar range (hKv1.1/KCNA1, IC(50)=253 nM; hKv1.3/KCNA3, IC(50)=91 nM; and hKCa3.1/KCNN4, IC(50)=70 nM). The sequence is that of Potassium channel toxin alpha-KTx 6.21 from Urodacus yaschenkoi (Inland robust scorpion).